The chain runs to 344 residues: uncharacterized protein (344 aa).

The disordered stretch occupies residues 95 to 344 (TINPEDANED…TPAKKNSKGR (250 aa)). Over residues 103–123 (EDAKVKNSLKLEKEEGSDEKS) the composition is skewed to basic and acidic residues. Residues 135 to 155 (SDDESDNSNDSEESEAEDSDQ) show a composition bias toward acidic residues. Residues 191–200 (SAKNAKASKP) are compositionally biased toward low complexity. The span at 244–259 (SEDEDSGSDNSEEESE) shows a compositional bias: acidic residues. Over residues 265 to 276 (ASSKKPPSKSSK) the composition is skewed to basic residues. Over residues 281–314 (EDEDEDSGQSESEHSEEESNSDEDSGQSEEESEE) the composition is skewed to acidic residues. A compositionally biased stretch (basic residues) spans 331-344 (TAKKTPAKKNSKGR).

This is an uncharacterized protein from Acanthamoeba polyphaga (Amoeba).